The primary structure comprises 341 residues: Cell division protein ZipA (341 aa).

Topologically, residues 1–6 are periplasmic; it reads MENLQL. Residues 7-27 form a helical membrane-spanning segment; sequence VLFVLGAIAIVAVLVHGFWSI. Over 28–341 the chain is Cytoplasmic; that stretch reads RKQQPKSLKE…YLQRIRTQNS (314 aa). Disordered stretches follow at residues 35–134 and 157–201; these read LKES…PVLS and QSSL…PEPE. Residues 90-100 show a composition bias toward polar residues; sequence TLTSEGQMDSS. The segment covering 175 to 190 has biased composition (low complexity); that stretch reads SIEVPEPVSEPVLESV. Over residues 192-201 the composition is skewed to pro residues; sequence EPEPVAPEPE.

Belongs to the ZipA family. Interacts with FtsZ via their C-terminal domains.

It is found in the cell inner membrane. Essential cell division protein that stabilizes the FtsZ protofilaments by cross-linking them and that serves as a cytoplasmic membrane anchor for the Z ring. Also required for the recruitment to the septal ring of downstream cell division proteins. The sequence is that of Cell division protein ZipA from Shewanella sediminis (strain HAW-EB3).